The following is a 604-amino-acid chain: uncharacterized protein (604 aa).

The disordered stretch occupies residues 239–259 (ELNSPQELNDPQELNNSQDLN).

This is an uncharacterized protein from Escherichia coli (strain K12).